The sequence spans 1477 residues: Putative insulin-like peptide receptor (1477 aa).

An N-terminal signal peptide occupies residues 1–24 (MMRNVQSFYFLFLLIVLNFHVVLS). Residues 25–980 (AVCIGQRATT…LSVTKNNNQL (956 aa)) lie on the Extracellular side of the membrane. N-linked (GlcNAc...) asparagine glycosylation is found at Asn-55, Asn-255, Asn-300, Asn-325, Asn-457, Asn-491, Asn-549, Asn-644, Asn-732, Asn-791, Asn-874, Asn-895, and Asn-957. Fibronectin type-III domains follow at residues 652 to 750 (EPLG…IKAD) and 780 to 869 (NKSP…IVQA). The 92-residue stretch at 880–971 (LDSKMVRVQV…EEIHFKVAEL (92 aa)) folds into the Fibronectin type-III 3 domain. The helical transmembrane segment at 981 to 1001 (IIGIISAVSAVIVALLVFILL) threads the bilayer. Residues 1002–1477 (YMFLHRKLEK…EIFYGKPIPV (476 aa)) lie on the Cytoplasmic side of the membrane. The Protein kinase domain maps to 1044-1315 (IELIRELGQG…LENEVDDDFV (272 aa)). Residues 1050–1058 (LGQGSFGMV) and Lys-1077 contribute to the ATP site. Catalysis depends on Asp-1175, which acts as the Proton acceptor. The residue at position 1201 (Tyr-1201) is a Phosphotyrosine; by autocatalysis. Disordered stretches follow at residues 1350–1376 (YTKG…KSKE) and 1391–1421 (KYDA…SNAC). The segment covering 1356–1368 (NMQNMLSRSQNRK) has biased composition (polar residues). Residues 1403–1412 (KKKKRPRSKR) show a composition bias toward basic residues.

It belongs to the protein kinase superfamily. Tyr protein kinase family. Insulin receptor subfamily. Mn(2+) is required as a cofactor. In terms of tissue distribution, expressed in dividing epithelial cells.

It is found in the membrane. The catalysed reaction is L-tyrosyl-[protein] + ATP = O-phospho-L-tyrosyl-[protein] + ADP + H(+). Functionally, this receptor probably binds an insulin related protein and has a tyrosine-protein kinase activity. The sequence is that of Putative insulin-like peptide receptor (HTK7) from Hydra vulgaris (Hydra).